A 347-amino-acid polypeptide reads, in one-letter code: Two pore potassium channel a (347 aa).

Residues Met1–Leu11 show a composition bias toward polar residues. Residues Met1–Ser49 are disordered. The Cytoplasmic portion of the chain corresponds to Met1–Arg65. Residues Leu66–Met86 traverse the membrane as a helical segment. An intramembrane region (pore-forming) is located at residues Asp99–Pro118. The helical transmembrane segment at Leu125–Val145 threads the bilayer. Residues Ala146–Tyr183 are Cytoplasmic-facing. Residues Lys184–Trp204 traverse the membrane as a helical segment. Positions Asp213–Phe232 form an intramembrane region, pore-forming. Residues Val239–Leu259 form a helical membrane-spanning segment. Over Ala260 to Gln347 the chain is Cytoplasmic. 2 EF-hand domains span residues Leu276–Lys311 and Glu315–Gln347. Ca(2+) contacts are provided by Asp289, Asp291, Asp293, Gln295, Glu300, Asp328, Asp330, Ser332, Thr334, and Asp339.

The protein belongs to the two pore domain potassium channel (TC 1.A.1.7) family. As to quaternary structure, homodimer.

Its subcellular location is the vacuole membrane. Its function is as follows. Highly selective inward-rectifying potassium channel that is specifically located in the tonoplast of large vacuoles. Functions independently of the voltage difference across the membrane. In Oryza sativa subsp. japonica (Rice), this protein is Two pore potassium channel a (TPKA).